The sequence spans 910 residues: Leucine--tRNA ligase (910 aa).

A 'HIGH' region motif is present at residues 42–52 (PYPSGKLHMGH). The short motif at 668–672 (KMSKS) is the 'KMSKS' region element. Position 671 (K671) interacts with ATP.

It belongs to the class-I aminoacyl-tRNA synthetase family.

The protein resides in the cytoplasm. The enzyme catalyses tRNA(Leu) + L-leucine + ATP = L-leucyl-tRNA(Leu) + AMP + diphosphate. The polypeptide is Leucine--tRNA ligase (Neisseria meningitidis serogroup A / serotype 4A (strain DSM 15465 / Z2491)).